Here is a 327-residue protein sequence, read N- to C-terminus: Transaldolase (327 aa).

The Schiff-base intermediate with substrate role is filled by K132.

This sequence belongs to the transaldolase family. Type 1 subfamily.

It localises to the cytoplasm. It carries out the reaction D-sedoheptulose 7-phosphate + D-glyceraldehyde 3-phosphate = D-erythrose 4-phosphate + beta-D-fructose 6-phosphate. The protein operates within carbohydrate degradation; pentose phosphate pathway; D-glyceraldehyde 3-phosphate and beta-D-fructose 6-phosphate from D-ribose 5-phosphate and D-xylulose 5-phosphate (non-oxidative stage): step 2/3. Its function is as follows. Transaldolase is important for the balance of metabolites in the pentose-phosphate pathway. This Chlamydia trachomatis serovar D (strain ATCC VR-885 / DSM 19411 / UW-3/Cx) protein is Transaldolase.